The primary structure comprises 162 residues: Regulator of ribonuclease activity A (162 aa).

The protein belongs to the RraA family. As to quaternary structure, homotrimer. Binds to both RNA-binding sites in the C-terminal region of Rne and to RhlB.

It localises to the cytoplasm. In terms of biological role, globally modulates RNA abundance by binding to RNase E (Rne) and regulating its endonucleolytic activity. Can modulate Rne action in a substrate-dependent manner by altering the composition of the degradosome. Modulates RNA-binding and helicase activities of the degradosome. This Haemophilus influenzae (strain 86-028NP) protein is Regulator of ribonuclease activity A.